Reading from the N-terminus, the 256-residue chain is MSPSVLEIRGLRIETQAGVLVHDVDLQLRRGEVCTLVGASGSGKSLSCLGLLDLLPPGLARTQGQLLLDGQPLAASSVRGRLTSLVLQNPRSAFNPVRNMASHAIETLRQRGITSAVARARMAHCLDAVGLADTERVLQSFAFQLSGGMLQRMMIALALMAETPFLLADEPTSDLDALSQARFLDLLMELVQVHGLGVLLVTHDMGVVARCADQVAVMEAGRIVECQPAHELFQRPASATARTLLHAHQVLCRSQP.

The 240-residue stretch at 6–245 (LEIRGLRIET…PASATARTLL (240 aa)) folds into the ABC transporter domain. An ATP-binding site is contributed by 38-45 (GASGSGKS).

Belongs to the ABC transporter superfamily. Nickel importer (TC 3.A.1.5.3) family. The complex is composed of two ATP-binding proteins (NikD and NikE), two transmembrane proteins (NikB and NikC) and a solute-binding protein (NikA).

Its subcellular location is the cell inner membrane. The catalysed reaction is Ni(2+)(out) + ATP + H2O = Ni(2+)(in) + ADP + phosphate + H(+). Functionally, part of the ABC transporter complex NikABCDE involved in nickel import. Responsible for energy coupling to the transport system. This Pseudomonas putida (strain ATCC 47054 / DSM 6125 / CFBP 8728 / NCIMB 11950 / KT2440) protein is Nickel import ATP-binding protein NikD.